The primary structure comprises 289 residues: Diaminopimelate epimerase (289 aa).

3 residues coordinate substrate: Asn17, Gln47, and Asn67. The active-site Proton donor is Cys76. Substrate-binding positions include 77–78 (GN), Asn164, Asn198, and 216–217 (ER). Catalysis depends on Cys225, which acts as the Proton acceptor. 226 to 227 (GS) serves as a coordination point for substrate.

Belongs to the diaminopimelate epimerase family. As to quaternary structure, homodimer.

Its subcellular location is the cytoplasm. The catalysed reaction is (2S,6S)-2,6-diaminopimelate = meso-2,6-diaminopimelate. The protein operates within amino-acid biosynthesis; L-lysine biosynthesis via DAP pathway; DL-2,6-diaminopimelate from LL-2,6-diaminopimelate: step 1/1. Its function is as follows. Catalyzes the stereoinversion of LL-2,6-diaminopimelate (L,L-DAP) to meso-diaminopimelate (meso-DAP), a precursor of L-lysine and an essential component of the bacterial peptidoglycan. The sequence is that of Diaminopimelate epimerase from Bradyrhizobium sp. (strain ORS 278).